Here is a 435-residue protein sequence, read N- to C-terminus: Antho-RFamide neuropeptides type 1 (435 aa).

The signal sequence occupies residues 1 to 22 (MTTVSYVTILLTVLVQVLTSDA). Positions 23–193 (KATNNKRELS…SVPGRYGREL (171 aa)) are excised as a propeptide. Glutamine 194 carries the pyrrolidone carboxylic acid modification. Phenylalanine 197 bears the Phenylalanine amide mark. A propeptide spanning residues 199 to 201 (REL) is cleaved from the precursor. Phenylalanine 205 is subject to Phenylalanine amide. Positions 207–209 (REA) are excised as a propeptide. A Phenylalanine amide modification is found at phenylalanine 213. Residues 215–217 (REL) constitute a propeptide that is removed on maturation. A Phenylalanine amide modification is found at phenylalanine 221. Positions 223–225 (REF) are excised as a propeptide. Phenylalanine 229 is subject to Phenylalanine amide. Basic and acidic residues predominate over residues 230 to 371 (GREDQGRFGR…EDIAEADQGR (142 aa)). Disordered stretches follow at residues 230 to 374 (GRED…RFGR) and 386 to 435 (AKKR…AKTS). A propeptide spanning residues 231–233 (RED) is cleaved from the precursor. The residue at position 237 (phenylalanine 237) is a Phenylalanine amide. A propeptide spanning residues 239–241 (RED) is cleaved from the precursor. A Phenylalanine amide modification is found at phenylalanine 245. Residues 247-249 (RED) constitute a propeptide that is removed on maturation. Phenylalanine 253 is modified (phenylalanine amide). A propeptide spanning residues 255 to 257 (RED) is cleaved from the precursor. Phenylalanine 261 is subject to Phenylalanine amide. Positions 263–265 (RED) are excised as a propeptide. Phenylalanine 269 is modified (phenylalanine amide). Residues 271-273 (RED) constitute a propeptide that is removed on maturation. Phenylalanine amide is present on phenylalanine 277. Positions 279-281 (REL) are excised as a propeptide. Residue phenylalanine 285 is modified to Phenylalanine amide. The propeptide occupies 287–289 (REF). Phenylalanine 293 is subject to Phenylalanine amide. Residues 295–297 (RED) constitute a propeptide that is removed on maturation. Phenylalanine 301 carries the post-translational modification Phenylalanine amide. Positions 303–305 (RED) are excised as a propeptide. Phenylalanine 309 carries the post-translational modification Phenylalanine amide. Residues 311 to 313 (REL) constitute a propeptide that is removed on maturation. Position 317 is a phenylalanine amide (phenylalanine 317). A propeptide spanning residues 319–321 (RED) is cleaved from the precursor. Phenylalanine amide is present on phenylalanine 325. A propeptide spanning residues 327-329 (RED) is cleaved from the precursor. At phenylalanine 333 the chain carries Phenylalanine amide. The propeptide occupies 335–342 (REDLAKED). Residue phenylalanine 346 is modified to Phenylalanine amide. Positions 348 to 355 (REDLAKED) are excised as a propeptide. Phenylalanine 359 carries the phenylalanine amide modification. A propeptide spanning residues 361–368 (REDIAEAD) is cleaved from the precursor. Position 372 is a phenylalanine amide (phenylalanine 372). A propeptide spanning residues 374 to 435 (RNAAAAAAAA…KSDDALAKTS (62 aa)) is cleaved from the precursor. Residues 398-435 (SDPKPQTRFRDGKDMQEKRKVEKKDKIEKSDDALAKTS) are compositionally biased toward basic and acidic residues.

Belongs to the FARP (FMRFamide related peptide) family.

It is found in the secreted. Not known but it could act as a transmitter at neuromuscular synapses. This chain is Antho-RFamide neuropeptides type 1, found in Anthopleura elegantissima (Green aggregating anemone).